The chain runs to 142 residues: Ribonuclease VapC44 (142 aa).

The PINc domain maps to 4–126; sequence LLDVNVLLAL…GRFVTFDQSI (123 aa). Positions 6 and 105 each coordinate Mg(2+).

This sequence belongs to the PINc/VapC protein family. Mg(2+) is required as a cofactor.

Its function is as follows. Toxic component of a type II toxin-antitoxin (TA) system. An RNase. Its cognate antitoxin is VapB44. This Mycobacterium tuberculosis (strain CDC 1551 / Oshkosh) protein is Ribonuclease VapC44.